An 89-amino-acid polypeptide reads, in one-letter code: Large ribosomal subunit protein bL27 (89 aa).

The interval 1–21 is disordered; that stretch reads MAHKKSGGSSRNGRDSNPKYL.

It belongs to the bacterial ribosomal protein bL27 family.

This Hyphomonas neptunium (strain ATCC 15444) protein is Large ribosomal subunit protein bL27.